We begin with the raw amino-acid sequence, 151 residues long: Small ribosomal subunit protein uS15 (151 aa).

This sequence belongs to the universal ribosomal protein uS15 family. Component of the small ribosomal subunit. Part of the small subunit (SSU) processome, composed of more than 70 proteins and the RNA chaperone small nucleolar RNA (snoRNA) U3.

It localises to the cytoplasm. The protein localises to the nucleus. It is found in the nucleolus. Its function is as follows. Component of the small ribosomal subunit. The ribosome is a large ribonucleoprotein complex responsible for the synthesis of proteins in the cell. Part of the small subunit (SSU) processome, first precursor of the small eukaryotic ribosomal subunit. During the assembly of the SSU processome in the nucleolus, many ribosome biogenesis factors, an RNA chaperone and ribosomal proteins associate with the nascent pre-rRNA and work in concert to generate RNA folding, modifications, rearrangements and cleavage as well as targeted degradation of pre-ribosomal RNA by the RNA exosome. In Caenorhabditis elegans, this protein is Small ribosomal subunit protein uS15 (rps-13).